We begin with the raw amino-acid sequence, 132 residues long: uncharacterized protein (132 aa).

A signal peptide spans 1-24; sequence MVTIGSSSLVLFLFFVVFVQITYT. 2 helical membrane passes run 75-95 and 112-132; these read YVNV…ILGI and ESAI…VYIH.

The protein localises to the membrane. This is an uncharacterized protein from Saccharomyces cerevisiae (strain ATCC 204508 / S288c) (Baker's yeast).